The primary structure comprises 196 residues: Phosphatidyl-N-methylethanolamine N-methyltransferase (196 aa).

Residue methionine 1 is a topological domain, lumenal. An intramembrane region (helical) is located at residues 2–28 (AIFEINNSFLICAVSIALNPLLWNIAA). Over 29-40 (RSEYNHKTLTKL) the chain is Lumenal. The helical transmembrane segment at 41-62 (ANGDSKKACYMLAACIFVAGIV) threads the bilayer. Residues 63–89 (RDLIYQNALKQQPTLGIFMNPLVQGIA) lie on the Cytoplasmic side of the membrane. The chain crosses the membrane as a helical span at residues 90–110 (KLIFCFGSVLVLSSMYKLGLV). 94 to 96 (CFG) contributes to the S-adenosyl-L-methionine binding site. The Lumenal portion of the chain corresponds to 111-153 (GTYLGDYFGFLLPERVSGFPFNVNDNPMYNGSTLCFLSTALRY). Residues 154-174 (GKVAGLLLTLEVFFVYRIALK) traverse the membrane as a helical segment. Over 175–196 (FEEPFTAKIYAARDSKQAKKSE) the chain is Cytoplasmic. An S-adenosyl-L-methionine-binding site is contributed by 176–177 (EE).

This sequence belongs to the class VI-like SAM-binding methyltransferase superfamily. PEMT/PEM2 methyltransferase family.

It is found in the endoplasmic reticulum membrane. It localises to the mitochondrion membrane. The enzyme catalyses a 1,2-diacyl-sn-glycero-3-phospho-N-methylethanolamine + S-adenosyl-L-methionine = a 1,2-diacyl-sn-glycero-3-phospho-N,N-dimethylethanolamine + S-adenosyl-L-homocysteine + H(+). It carries out the reaction a 1,2-diacyl-sn-glycero-3-phospho-N,N-dimethylethanolamine + S-adenosyl-L-methionine = a 1,2-diacyl-sn-glycero-3-phosphocholine + S-adenosyl-L-homocysteine + H(+). It participates in phospholipid metabolism; phosphatidylcholine biosynthesis. In terms of biological role, catalyzes the second two steps of the methylation pathway of phosphatidylcholine biosynthesis, the SAM-dependent methylation of phosphatidylmonomethylethanolamine (PMME) to phosphatidyldimethylethanolamine (PDME) and of PDME to phosphatidylcholine (PC). This Schizosaccharomyces pombe (strain 972 / ATCC 24843) (Fission yeast) protein is Phosphatidyl-N-methylethanolamine N-methyltransferase.